The chain runs to 101 residues: MGKCLLLPLLLVVLSSLLGFPQALECFQCQRVSASGVCESGKSFCQTQGSQQCFLRKVYEGDTVSYGHQGCSSLCVPMKFFRPNVTVDFRCCHDSPFCNKF.

A signal peptide spans 1 to 23 (MGKCLLLPLLLVVLSSLLGFPQA). Residues 24–101 (LECFQCQRVS…CHDSPFCNKF (78 aa)) enclose the UPAR/Ly6 domain. Cystine bridges form between cysteine 26/cysteine 53, cysteine 29/cysteine 38, cysteine 45/cysteine 71, cysteine 75/cysteine 91, and cysteine 92/cysteine 98. Asparagine 84 is a glycosylation site (N-linked (GlcNAc...) asparagine).

It localises to the secreted. This Sus scrofa (Pig) protein is Protein PIP-1.